The sequence spans 79 residues: Acyl carrier protein 2 (79 aa).

The 76-residue stretch at 2-77 folds into the Carrier domain; the sequence is DDIETRVRKL…QAIDYLEEAV (76 aa). Position 37 is an O-(pantetheine 4'-phosphoryl)serine (serine 37).

Belongs to the acyl carrier protein (ACP) family. In terms of processing, 4'-phosphopantetheine is transferred from CoA to a specific serine of apo-ACP by AcpS. This modification is essential for activity because fatty acids are bound in thioester linkage to the sulfhydryl of the prosthetic group.

The protein localises to the cytoplasm. Its pathway is lipid metabolism; fatty acid biosynthesis. Carrier of the growing fatty acid chain in fatty acid biosynthesis. The sequence is that of Acyl carrier protein 2 from Pseudomonas aeruginosa (strain ATCC 15692 / DSM 22644 / CIP 104116 / JCM 14847 / LMG 12228 / 1C / PRS 101 / PAO1).